Here is a 129-residue protein sequence, read N- to C-terminus: Large ribosomal subunit protein bL12 (129 aa).

The tract at residues Thr-94 to Thr-113 is disordered.

The protein belongs to the bacterial ribosomal protein bL12 family. Homodimer. Part of the ribosomal stalk of the 50S ribosomal subunit. Forms a multimeric L10(L12)X complex, where L10 forms an elongated spine to which 2 to 4 L12 dimers bind in a sequential fashion. Binds GTP-bound translation factors.

In terms of biological role, forms part of the ribosomal stalk which helps the ribosome interact with GTP-bound translation factors. Is thus essential for accurate translation. The sequence is that of Large ribosomal subunit protein bL12 from Chlamydia pneumoniae (Chlamydophila pneumoniae).